A 320-amino-acid polypeptide reads, in one-letter code: Small ribosomal subunit protein uS15m (320 aa).

Disordered regions lie at residues 37-60 and 214-242; these read NISQKEKKRKMKQDPYGWAQAQQR and QSLERPTPPLARGVEPKPQPVRAGPDTGS.

It belongs to the universal ribosomal protein uS15 family. As to quaternary structure, component of the mitochondrial small ribosomal subunit (mt-SSU). Mature N.crassa 74S mitochondrial ribosomes consist of a small (37S) and a large (54S) subunit. The 37S small subunit contains a 16S ribosomal RNA (16S mt-rRNA) and 32 different proteins. The 54S large subunit contains a 23S rRNA (23S mt-rRNA) and 42 different proteins.

It is found in the mitochondrion. In terms of biological role, component of the mitochondrial ribosome (mitoribosome), a dedicated translation machinery responsible for the synthesis of mitochondrial genome-encoded proteins, including at least some of the essential transmembrane subunits of the mitochondrial respiratory chain. The mitoribosomes are attached to the mitochondrial inner membrane and translation products are cotranslationally integrated into the membrane. The sequence is that of Small ribosomal subunit protein uS15m (mrps28) from Neurospora crassa (strain ATCC 24698 / 74-OR23-1A / CBS 708.71 / DSM 1257 / FGSC 987).